The following is a 423-amino-acid chain: Histone deacetylase 14, chloroplastic (423 aa).

Residues 1–44 (MSMALIVRPFFVPGSAGISGSRNICKKNQWRKYLLKPSGSSINC) constitute a chloroplast transit peptide. The segment at 62–392 (DARLIYSVSA…FRALLGEDSL (331 aa)) is histone deacetylase. His202 acts as the Proton donor/acceptor in catalysis. Zn(2+) is bound by residues Asp239, His241, and Asp326.

It belongs to the histone deacetylase family. As to quaternary structure, interacts with PP2A2. Zn(2+) serves as cofactor. In terms of tissue distribution, expressed in stems, leaves, flowers, siliques and mature seeds.

The protein resides in the nucleus. Its subcellular location is the cytoplasm. It is found in the plastid. The protein localises to the chloroplast stroma. It localises to the mitochondrion. The enzyme catalyses N-acetylserotonin + H2O = serotonin + acetate. The catalysed reaction is N-acetyltyramine + H2O = tyramine + acetate. It catalyses the reaction N-acetyltryptamine + H2O = tryptamine + acetate. It carries out the reaction melatonin + H2O = 5-methoxytryptamine + acetate. With respect to regulation, its activity is inhibited by trichostatin A (TSA), a known histone deacetylase inhibitor. Its function is as follows. Regulates lysine acetylation levels of plastid proteins related to photosynthesis. Involved in the regulation of the activation state of RuBisCO, which is controlled by lysine acetylation of RuBisCO activase under low-light conditions. Associates with alpha- and beta-tubulins and deacetylate alpha-tubulin. Does not seem to be required for the cellular patterning in the root epidermis. Involved in the regulation of melatonin biosynthesis by catalyzing the deacetylation of N-acetylserotonin to produce serotonin. N-acetylserotonin is methylated by acetylserotonin O-methyltransferase (ASMT) to produce melatonin (N-acetyl-5-methoxytryptamine). Deacetylates melatonin to produce 5-methoxytryptamine. In vitro, deacetylates N-acetyltyramine and N-acetyltryptamine to produce tyramine and tryptamine, respectively. The chain is Histone deacetylase 14, chloroplastic from Arabidopsis thaliana (Mouse-ear cress).